The sequence spans 241 residues: Carboxy-S-adenosyl-L-methionine synthase (241 aa).

S-adenosyl-L-methionine-binding positions include Tyr38, 63-65 (GCS), 88-89 (DN), 116-117 (DI), Asn131, and Arg198.

It belongs to the class I-like SAM-binding methyltransferase superfamily. Cx-SAM synthase family. In terms of assembly, homodimer.

The catalysed reaction is prephenate + S-adenosyl-L-methionine = carboxy-S-adenosyl-L-methionine + 3-phenylpyruvate + H2O. Its function is as follows. Catalyzes the conversion of S-adenosyl-L-methionine (SAM) to carboxy-S-adenosyl-L-methionine (Cx-SAM). In Actinobacillus succinogenes (strain ATCC 55618 / DSM 22257 / CCUG 43843 / 130Z), this protein is Carboxy-S-adenosyl-L-methionine synthase.